The sequence spans 330 residues: Ubiquinone biosynthesis protein COQ4, mitochondrial (330 aa).

A mitochondrion-targeting transit peptide spans 1–31 (MLQSTKVTKSVLTNVLRVEQRRGFLLSGAAV). Zn(2+) is bound by residues His-212, Asp-213, His-216, and Glu-228.

This sequence belongs to the COQ4 family. As to quaternary structure, component of a multi-subunit COQ enzyme complex, composed of at least COQ3, COQ4, COQ5, COQ6, COQ7 and COQ9. Requires Zn(2+) as cofactor.

It localises to the mitochondrion inner membrane. The catalysed reaction is a 4-hydroxy-3-methoxy-5-(all-trans-polyprenyl)benzoate + H(+) = a 2-methoxy-6-(all-trans-polyprenyl)phenol + CO2. It participates in cofactor biosynthesis; ubiquinone biosynthesis. Lyase that catalyzes the C1-decarboxylation of 4-hydroxy-3-methoxy-5-(all-trans-polyprenyl)benzoic acid into 2-methoxy-6-(all-trans-polyprenyl)phenol during ubiquinone biosynthesis. The chain is Ubiquinone biosynthesis protein COQ4, mitochondrial from Candida glabrata (strain ATCC 2001 / BCRC 20586 / JCM 3761 / NBRC 0622 / NRRL Y-65 / CBS 138) (Yeast).